Here is a 238-residue protein sequence, read N- to C-terminus: Ribonuclease PH (238 aa).

Phosphate-binding positions include Arg86 and 124–126; that span reads GTR.

This sequence belongs to the RNase PH family. As to quaternary structure, homohexameric ring arranged as a trimer of dimers.

It carries out the reaction tRNA(n+1) + phosphate = tRNA(n) + a ribonucleoside 5'-diphosphate. Phosphorolytic 3'-5' exoribonuclease that plays an important role in tRNA 3'-end maturation. Removes nucleotide residues following the 3'-CCA terminus of tRNAs; can also add nucleotides to the ends of RNA molecules by using nucleoside diphosphates as substrates, but this may not be physiologically important. Probably plays a role in initiation of 16S rRNA degradation (leading to ribosome degradation) during starvation. This is Ribonuclease PH from Edwardsiella ictaluri (strain 93-146).